Consider the following 262-residue polypeptide: UPF0758 protein R01728 (262 aa).

The interval 23–44 is disordered; that stretch reads PEKRTRNSPATAPAPATDTHYH. Residues 31–40 show a composition bias toward low complexity; sequence PATAPAPATD. Positions 140–262 constitute an MPN domain; it reads VLSSWSAVID…HVSLKGLRLF (123 aa). Zn(2+)-binding residues include histidine 211, histidine 213, and aspartate 224. The JAMM motif signature appears at 211–224; the sequence is HNHPSGDPTPSRAD.

It belongs to the UPF0758 family.

The chain is UPF0758 protein R01728 from Rhizobium meliloti (strain 1021) (Ensifer meliloti).